The sequence spans 301 residues: 2-methoxy-6-polyprenyl-1,4-benzoquinol methylase, mitochondrial (301 aa).

The N-terminal 16 residues, 1 to 16 (MQTTRSTRLLSLARRF), are a transit peptide targeting the mitochondrion. Residues 20–31 (RTASQSAQNSKG) are compositionally biased toward polar residues. Residues 20 to 44 (RTASQSAQNSKGMASGAESISGKEK) form a disordered region. Residues Thr-111, Asp-139, and 173-174 (DA) contribute to the S-adenosyl-L-methionine site.

It belongs to the class I-like SAM-binding methyltransferase superfamily. MenG/UbiE family. As to quaternary structure, component of a multi-subunit COQ enzyme complex.

The protein localises to the mitochondrion inner membrane. It carries out the reaction a 2-methoxy-6-(all-trans-polyprenyl)benzene-1,4-diol + S-adenosyl-L-methionine = a 5-methoxy-2-methyl-3-(all-trans-polyprenyl)benzene-1,4-diol + S-adenosyl-L-homocysteine + H(+). Its pathway is cofactor biosynthesis; ubiquinone biosynthesis. Its function is as follows. Methyltransferase required for the conversion of 2-polyprenyl-6-methoxy-1,4-benzoquinol (DDMQH2) to 2-polyprenyl-3-methyl-6-methoxy-1,4-benzoquinol (DMQH2). The sequence is that of 2-methoxy-6-polyprenyl-1,4-benzoquinol methylase, mitochondrial from Drosophila melanogaster (Fruit fly).